We begin with the raw amino-acid sequence, 113 residues long: ATP synthase epsilon chain (113 aa).

Belongs to the ATPase epsilon chain family. In terms of assembly, F-type ATPases have 2 components, CF(1) - the catalytic core - and CF(0) - the membrane proton channel. CF(1) has five subunits: alpha(3), beta(3), gamma(1), delta(1), epsilon(1). CF(0) has three main subunits: a, b and c.

Its subcellular location is the cell membrane. Its function is as follows. Produces ATP from ADP in the presence of a proton gradient across the membrane. The sequence is that of ATP synthase epsilon chain from Wolbachia pipientis subsp. Culex pipiens (strain wPip).